The chain runs to 483 residues: Kynureninase 1 (483 aa).

Pyridoxal 5'-phosphate contacts are provided by residues L147, T148, F175–D178, S232, D261, H264, and Y286. An N6-(pyridoxal phosphate)lysine modification is found at K287. Positions 326 and 354 each coordinate pyridoxal 5'-phosphate.

It belongs to the kynureninase family. Homodimer. Pyridoxal 5'-phosphate is required as a cofactor.

It is found in the cytoplasm. The enzyme catalyses L-kynurenine + H2O = anthranilate + L-alanine + H(+). It carries out the reaction 3-hydroxy-L-kynurenine + H2O = 3-hydroxyanthranilate + L-alanine + H(+). It participates in amino-acid degradation; L-kynurenine degradation; L-alanine and anthranilate from L-kynurenine: step 1/1. It functions in the pathway cofactor biosynthesis; NAD(+) biosynthesis; quinolinate from L-kynurenine: step 2/3. In terms of biological role, catalyzes the cleavage of L-kynurenine (L-Kyn) and L-3-hydroxykynurenine (L-3OHKyn) into anthranilic acid (AA) and 3-hydroxyanthranilic acid (3-OHAA), respectively. In Aspergillus terreus (strain NIH 2624 / FGSC A1156), this protein is Kynureninase 1 (bna5-1).